A 181-amino-acid polypeptide reads, in one-letter code: MGRTLENKKEIVADLKETLGESTLALVIEYQGLTVAEITDLRKRLRPSGTVCKVTKNTLMGIAIQDDEKWQPLSELLKGSSAFLLVKEDFSSAIKAYQEFQKVTKKTELRGGVMEGRLLKEPDVKALGDLPSKEQLMGQIAGAINALATKIAVGINEVPGGLARALQAVADKENGGDDSAA.

Belongs to the universal ribosomal protein uL10 family. As to quaternary structure, part of the ribosomal stalk of the 50S ribosomal subunit. The N-terminus interacts with L11 and the large rRNA to form the base of the stalk. The C-terminus forms an elongated spine to which L12 dimers bind in a sequential fashion forming a multimeric L10(L12)X complex.

Its function is as follows. Forms part of the ribosomal stalk, playing a central role in the interaction of the ribosome with GTP-bound translation factors. The protein is Large ribosomal subunit protein uL10 of Nostoc sp. (strain PCC 7120 / SAG 25.82 / UTEX 2576).